Here is a 570-residue protein sequence, read N- to C-terminus: Glucan 1,3-beta-glucosidase 2 (570 aa).

Residues Asn-91, Asn-116, Asn-121, Asn-184, Asn-203, and Asn-248 are each glycosylated (N-linked (GlcNAc...) asparagine). The active-site Proton donor is Glu-338. N-linked (GlcNAc...) asparagine glycosylation is present at Asn-364. Glu-439 functions as the Nucleophile in the catalytic mechanism. 2 N-linked (GlcNAc...) asparagine glycosylation sites follow: Asn-525 and Asn-552.

This sequence belongs to the glycosyl hydrolase 5 (cellulase A) family.

It is found in the secreted. It carries out the reaction Successive hydrolysis of beta-D-glucose units from the non-reducing ends of (1-&gt;3)-beta-D-glucans, releasing alpha-glucose.. The chain is Glucan 1,3-beta-glucosidase 2 (exg2) from Schizosaccharomyces pombe (strain 972 / ATCC 24843) (Fission yeast).